The sequence spans 393 residues: Na(+)/H(+) antiporter NhaA (393 aa).

The next 11 membrane-spanning stretches (helical) occupy residues 18-38 (AGGV…NSPW), 65-85 (MLIW…GLEI), 101-121 (MLPA…YAAI), 131-151 (GWGI…VLLG), 160-180 (VFLT…IAFF), 184-204 (NLSP…LGLN), 210-230 (AVGP…KSGI), 260-280 (ALQP…NAGV), 298-318 (IAFG…WLLI), 334-354 (FFGV…IGSL), and 369-389 (IGVL…LLAS).

This sequence belongs to the NhaA Na(+)/H(+) (TC 2.A.33) antiporter family.

The protein resides in the cell inner membrane. It catalyses the reaction Na(+)(in) + 2 H(+)(out) = Na(+)(out) + 2 H(+)(in). Its function is as follows. Na(+)/H(+) antiporter that extrudes sodium in exchange for external protons. The protein is Na(+)/H(+) antiporter NhaA of Albidiferax ferrireducens (strain ATCC BAA-621 / DSM 15236 / T118) (Rhodoferax ferrireducens).